Consider the following 412-residue polypeptide: Zinc finger protein 821 (412 aa).

Positions 26 to 83 are disordered; it reads RQAMMKTDFPGDLGSQRQAIQQLRDQDSSSSDSEGDEEETTQDEVSSHTSEEDGGVVK. Residues 58–67 are compositionally biased toward acidic residues; the sequence is SEGDEEETTQ. 2 C2H2-type zinc fingers span residues 116–140 and 150–172; these read ELCQCPLCQLDCGSREQLIAHVYQH and YMCPVCGRALSSPGSLGRHLLIH. Positions 257-366 form a coiled coil; sequence KWALRRQNEP…EKMDMMLRAQ (110 aa). The disordered stretch occupies residues 278-319; it reads RTAKKSRRDNETPEEREVRRMRDREAKRLQRMQETDEQRARR.

It belongs to the krueppel C2H2-type zinc-finger protein family.

It localises to the nucleus. Its function is as follows. May be involved in transcriptional regulation. This is Zinc finger protein 821 (ZNF821) from Homo sapiens (Human).